We begin with the raw amino-acid sequence, 244 residues long: Phosphonates import ATP-binding protein PhnC 2 (244 aa).

The ABC transporter domain occupies 3 to 242 (LRVEGLKKVY…ELTDYTVDQL (240 aa)). 36–43 (GPSGAGKS) is a binding site for ATP.

It belongs to the ABC transporter superfamily. Phosphonates importer (TC 3.A.1.9.1) family. The complex is composed of two ATP-binding proteins (PhnC), two transmembrane proteins (PhnE) and a solute-binding protein (PhnD).

It localises to the cell membrane. It catalyses the reaction phosphonate(out) + ATP + H2O = phosphonate(in) + ADP + phosphate + H(+). Its function is as follows. Part of the ABC transporter complex PhnCDE involved in phosphonates import. Responsible for energy coupling to the transport system. In Halalkalibacterium halodurans (strain ATCC BAA-125 / DSM 18197 / FERM 7344 / JCM 9153 / C-125) (Bacillus halodurans), this protein is Phosphonates import ATP-binding protein PhnC 2.